The primary structure comprises 198 residues: dTTP/UTP pyrophosphatase (198 aa).

The active-site Proton acceptor is the Asp-75.

The protein belongs to the Maf family. YhdE subfamily. A divalent metal cation is required as a cofactor.

Its subcellular location is the cytoplasm. It carries out the reaction dTTP + H2O = dTMP + diphosphate + H(+). The enzyme catalyses UTP + H2O = UMP + diphosphate + H(+). Nucleoside triphosphate pyrophosphatase that hydrolyzes dTTP and UTP. May have a dual role in cell division arrest and in preventing the incorporation of modified nucleotides into cellular nucleic acids. The protein is dTTP/UTP pyrophosphatase of Wolbachia pipientis wMel.